The following is a 424-amino-acid chain: UPF0229 protein PC1_1960 (424 aa).

The tract at residues 46-109 is disordered; it reads IESGESVSIP…GQGDASKDGE (64 aa). Residues 77–90 are compositionally biased toward basic and acidic residues; sequence PGNDHFVQNDKIER. A compositionally biased stretch (gly residues) spans 92–101; the sequence is QGGGGGGSGQ.

Belongs to the UPF0229 family.

The chain is UPF0229 protein PC1_1960 from Pectobacterium carotovorum subsp. carotovorum (strain PC1).